Here is a 321-residue protein sequence, read N- to C-terminus: Peroxidase 4 (321 aa).

A signal peptide spans 1–25 (MASSSFSIVVVALGVLALFAGSSSA). Position 26 is a pyrrolidone carboxylic acid (glutamine 26). Cystine bridges form between cysteine 36/cysteine 116, cysteine 69/cysteine 74, cysteine 122/cysteine 317, and cysteine 201/cysteine 226. Catalysis depends on histidine 67, which acts as the Proton acceptor. Residues aspartate 68, valine 71, glycine 73, aspartate 75, and serine 77 each contribute to the Ca(2+) site. Proline 164 provides a ligand contact to substrate. Heme b is bound at residue histidine 194. Residue threonine 195 participates in Ca(2+) binding. An N-linked (GlcNAc...) asparagine glycan is attached at asparagine 210. Residues aspartate 241, threonine 244, and aspartate 249 each coordinate Ca(2+).

Belongs to the peroxidase family. Classical plant (class III) peroxidase subfamily. It depends on heme b as a cofactor. The cofactor is Ca(2+).

The protein localises to the secreted. The enzyme catalyses 2 a phenolic donor + H2O2 = 2 a phenolic radical donor + 2 H2O. Removal of H(2)O(2), oxidation of toxic reductants, biosynthesis and degradation of lignin, suberization, auxin catabolism, response to environmental stresses such as wounding, pathogen attack and oxidative stress. These functions might be dependent on each isozyme/isoform in each plant tissue. The protein is Peroxidase 4 of Vitis vinifera (Grape).